Consider the following 967-residue polypeptide: E3 ubiquitin-protein ligase arkadia-C (967 aa).

2 disordered regions span residues 57 to 175 (QQID…VSSL) and 193 to 276 (RKRF…SGGM). The segment covering 112–131 (SSFSDCISSPSSSSHFGDSD) has biased composition (low complexity). The span at 149–160 (GINSTPRTQSAR) shows a compositional bias: polar residues. The segment covering 232 to 251 (SSSSSSENDLSSESSSSSST) has biased composition (low complexity). The SUMO interaction motif 1 (SIM) signature appears at 280 to 284 (VVVIE). The SUMO interaction motif 2 (SIM) motif lies at 305–311 (EVEIVTV). The disordered stretch occupies residues 321-343 (LGHPRSHWGQNSQSGRTQEHRTR). An SUMO interaction motif 3 (SIM) motif is present at residues 360–364 (VVDLT). Disordered stretches follow at residues 368–452 (DDPT…MPRL), 482–548 (HSHH…LSNN), 629–657 (LHHQTSACPHSNPASQPPPPPPPPPMDYV), and 669–689 (PSLTSTHAVPPPPPSHHLSTA). Residues 385–395 (VSTVSSNTSTS) are compositionally biased toward low complexity. Over residues 482–498 (HSHHFPHHHHHHHHHSS) the composition is skewed to basic residues. The segment covering 629 to 642 (LHHQTSACPHSNPA) has biased composition (polar residues). Pro residues predominate over residues 643-654 (SQPPPPPPPPPM). The interval 880 to 882 (YPH) is ubiquitin binding. The Zn(2+) site is built by Cys915 and Cys918. The RING-type; atypical zinc-finger motif lies at 915-956 (CTICLSILEEGEDVRRLPCMHLFHQVCVDQWLITNKKCPICR). Residues 930–934 (RLPCM) form a ubiquitin binding region. Positions 938 and 941 each coordinate Zn(2+).

Belongs to the Arkadia family. In terms of assembly, monomer.

The protein localises to the nucleus. Its subcellular location is the cytoplasm. It localises to the PML body. It carries out the reaction S-ubiquitinyl-[E2 ubiquitin-conjugating enzyme]-L-cysteine + [acceptor protein]-L-lysine = [E2 ubiquitin-conjugating enzyme]-L-cysteine + N(6)-ubiquitinyl-[acceptor protein]-L-lysine.. The protein operates within protein modification; protein ubiquitination. Its activity is regulated as follows. Binds free ubiquitin non-covalently via its RING-type zinc finger. Ubiquitin-binding leads to enhance the E3 ubiquitin-protein ligase activity by stabilizing the ubiquitin-conjugating enzyme E2 (donor ubiquitin) in the 'closed' conformation and activating ubiquitin transfer. In terms of biological role, E3 ubiquitin-protein ligase required for mesoderm patterning during embryonic development. Acts as an enhancer of the transcriptional responses of the smad2/smad3 effectors, which are activated downstream of BMP. Acts by mediating ubiquitination and degradation of SMAD inhibitors such as smad7, inducing their proteasomal degradation and thereby enhancing the transcriptional activity of TGF-beta and BMP. Specifically binds polysumoylated chains via SUMO interaction motifs (SIMs) and mediates ubiquitination of sumoylated substrates. The regulation of the BMP-SMAD signaling is however independent of sumoylation and is not dependent of SUMO interaction motifs (SIMs). This chain is E3 ubiquitin-protein ligase arkadia-C (rnf111-c), found in Xenopus laevis (African clawed frog).